The sequence spans 948 residues: Bifunctional uridylyltransferase/uridylyl-removing enzyme (948 aa).

The segment at 1 to 372 (METHHIDFST…RFANRSRKIP (372 aa)) is uridylyltransferase. The interval 373–728 (GTVEFVEDRG…VRTDSFHAIT (356 aa)) is uridylyl-removing. Positions 489-605 (VDEHLIRAVE…IDFADRVQSL (117 aa)) constitute an HD domain. 2 consecutive ACT domains span residues 729–810 (EITV…EVIA) and 840–921 (VIEV…ERMP).

Belongs to the GlnD family. Requires Mg(2+) as cofactor.

The enzyme catalyses [protein-PII]-L-tyrosine + UTP = [protein-PII]-uridylyl-L-tyrosine + diphosphate. The catalysed reaction is [protein-PII]-uridylyl-L-tyrosine + H2O = [protein-PII]-L-tyrosine + UMP + H(+). With respect to regulation, uridylyltransferase (UTase) activity is inhibited by glutamine, while glutamine activates uridylyl-removing (UR) activity. Functionally, modifies, by uridylylation and deuridylylation, the PII regulatory proteins (GlnB and homologs), in response to the nitrogen status of the cell that GlnD senses through the glutamine level. Under low glutamine levels, catalyzes the conversion of the PII proteins and UTP to PII-UMP and PPi, while under higher glutamine levels, GlnD hydrolyzes PII-UMP to PII and UMP (deuridylylation). Thus, controls uridylylation state and activity of the PII proteins, and plays an important role in the regulation of nitrogen fixation and metabolism. This is Bifunctional uridylyltransferase/uridylyl-removing enzyme from Rhizobium tropici.